Reading from the N-terminus, the 351-residue chain is F-box protein At1g70590 (351 aa).

A disordered region spans residues methionine 1–asparagine 60. The span at isoleucine 32 to lysine 41 shows a compositional bias: polar residues. Residues serine 42 to serine 59 are compositionally biased toward low complexity. The region spanning phenylalanine 62 to tryptophan 111 is the F-box domain. Residues serine 105–serine 141 form a Sel1-like repeat. The TPR repeat unit spans residues threonine 142–valine 175.

In Arabidopsis thaliana (Mouse-ear cress), this protein is F-box protein At1g70590.